Reading from the N-terminus, the 318-residue chain is tRNA-cytidine(32) 2-sulfurtransferase (318 aa).

The PP-loop motif motif lies at S65–S70. C140, C143, and C231 together coordinate [4Fe-4S] cluster.

It belongs to the TtcA family. As to quaternary structure, homodimer. The cofactor is Mg(2+). Requires [4Fe-4S] cluster as cofactor.

It localises to the cytoplasm. It catalyses the reaction cytidine(32) in tRNA + S-sulfanyl-L-cysteinyl-[cysteine desulfurase] + AH2 + ATP = 2-thiocytidine(32) in tRNA + L-cysteinyl-[cysteine desulfurase] + A + AMP + diphosphate + H(+). It functions in the pathway tRNA modification. Functionally, catalyzes the ATP-dependent 2-thiolation of cytidine in position 32 of tRNA, to form 2-thiocytidine (s(2)C32). The sulfur atoms are provided by the cysteine/cysteine desulfurase (IscS) system. In Herminiimonas arsenicoxydans, this protein is tRNA-cytidine(32) 2-sulfurtransferase.